The following is a 323-amino-acid chain: Ankyrin repeat and SOCS box protein 11 (323 aa).

6 ANK repeats span residues 64-93 (ADRS…NVNL), 97-126 (NRVS…HVNG), 130-159 (HGAT…KAQF), 162-191 (HLAS…NIDH), 195-224 (QLGT…SVDH), and 227-256 (WLDT…NLKR). Residues 274-323 (VEQALLLCEGPPALSQLCRLCVRKCLGRACHQAIHKLHLPEPLERFLLYQ) form the SOCS box domain.

Belongs to the ankyrin SOCS box (ASB) family. In terms of assembly, substrate-recognition component of the ECS(ASB11) complex, composed of ASB11, CUL5, ELOB, ELOC and RNF7/RBX2.

It localises to the endoplasmic reticulum. The protein operates within protein modification; protein ubiquitination. Substrate-recognition component of a cullin-5-RING E3 ubiquitin-protein ligase complex (ECS complex, also named CRL5 complex), which mediates the ubiquitination and subsequent proteasomal degradation of target proteins, such as BIK, DIRAS2 and RPN1. The ECS(ASB11) complex acts as a regulator of the endoplasmic reticulum unfolded protein response by mediating ubiquitination and degradation of BIK. The protein is Ankyrin repeat and SOCS box protein 11 (ASB11) of Pongo abelii (Sumatran orangutan).